The sequence spans 913 residues: Polyribonucleotide nucleotidyltransferase (913 aa).

The tract at residues 407 to 427 is disordered; sequence YMHNYEMPPYSTGETGRVGSP. Residues D521 and D527 each contribute to the Mg(2+) site. Positions 587–646 constitute a KH domain; it reads PRIITTSVPVEKIGEVIGPKGKMINQIQEDTGAEIAIEDDGTVFISSEGGEAAEKAKAII. The 73-residue stretch at 658-730 folds into the S1 motif domain; sequence GETYNGKVVK…DRGKISLAIP (73 aa). The disordered stretch occupies residues 727 to 913; it reads LAIPGFEDQE…VRRDFDPFED (187 aa). 3 stretches are compositionally biased toward basic and acidic residues: residues 742–789, 797–865, and 872–898; these read SRGD…RRSD, DRPR…DRRG, and RGSD…ERTE.

Belongs to the polyribonucleotide nucleotidyltransferase family. Mg(2+) is required as a cofactor.

The protein resides in the cytoplasm. It catalyses the reaction RNA(n+1) + phosphate = RNA(n) + a ribonucleoside 5'-diphosphate. Functionally, involved in mRNA degradation. Catalyzes the phosphorolysis of single-stranded polyribonucleotides processively in the 3'- to 5'-direction. The polypeptide is Polyribonucleotide nucleotidyltransferase (Bifidobacterium longum (strain DJO10A)).